The primary structure comprises 947 residues: Valine--tRNA ligase (947 aa).

Residues 45 to 55 (PNVTGSLHMGH) carry the 'HIGH' region motif. A 'KMSKS' region motif is present at residues 591–595 (KMSKS). Lys-594 contributes to the ATP binding site. Residues 879–943 (DLAAEQARLE…ASLRTALTRV (65 aa)) adopt a coiled-coil conformation.

Belongs to the class-I aminoacyl-tRNA synthetase family. ValS type 1 subfamily. As to quaternary structure, monomer.

It localises to the cytoplasm. It catalyses the reaction tRNA(Val) + L-valine + ATP = L-valyl-tRNA(Val) + AMP + diphosphate. Its function is as follows. Catalyzes the attachment of valine to tRNA(Val). As ValRS can inadvertently accommodate and process structurally similar amino acids such as threonine, to avoid such errors, it has a 'posttransfer' editing activity that hydrolyzes mischarged Thr-tRNA(Val) in a tRNA-dependent manner. The protein is Valine--tRNA ligase of Agrobacterium fabrum (strain C58 / ATCC 33970) (Agrobacterium tumefaciens (strain C58)).